The chain runs to 310 residues: Hairy/enhancer-of-split related with YRPW motif-like protein (310 aa).

The disordered stretch occupies residues 1 to 21 (MKRPHDYSSPDSDTDELIDVG). Residues 12–21 (SDTDELIDVG) show a composition bias toward acidic residues. In terms of domain architecture, bHLH spans 43–98 (ARKKRRGIIEKRRRDRINHSLSELRRLVPSAFEKQGSSKLEKAEILQMTVDHLKLL). Positions 116–152 (YRTLGFRECVGEVVRYLSSLEGVESSDPIGARLVSHL) constitute an Orange domain. 2 stretches are compositionally biased toward low complexity: residues 182 to 192 (LQAASPPASST) and 261 to 273 (PSSS…SSPP). Disordered stretches follow at residues 182–208 (LQAA…HGTA) and 248–310 (HRLQ…IGAF). Polar residues predominate over residues 293-302 (LSSSSKSAQA).

Belongs to the HEY family.

The protein resides in the nucleus. Its function is as follows. Transcriptional repressor which functions as a downstream effector of Notch signaling. This is Hairy/enhancer-of-split related with YRPW motif-like protein (heyl) from Danio rerio (Zebrafish).